Consider the following 183-residue polypeptide: MVLKDNVIDNWANALTKIAVKENKVKKMLEQAHVLIEVLKNKNEFVDILTFKSAHDEEKRIKIIDDTFSQFNIDEDIMNAFKILVHMQAFVNARDILKKLRGKLVELDNMTYGVVWSTEEISAAQIKEIEEKMSKKINKEVKLVNKIDTKLIAGIQVVVHNKVYDGSLRSKLDEMKYQVLKEK.

Belongs to the ATPase delta chain family. In terms of assembly, F-type ATPases have 2 components, F(1) - the catalytic core - and F(0) - the membrane proton channel. F(1) has five subunits: alpha(3), beta(3), gamma(1), delta(1), epsilon(1). F(0) has three main subunits: a(1), b(2) and c(10-14). The alpha and beta chains form an alternating ring which encloses part of the gamma chain. F(1) is attached to F(0) by a central stalk formed by the gamma and epsilon chains, while a peripheral stalk is formed by the delta and b chains.

It is found in the cell membrane. Its function is as follows. F(1)F(0) ATP synthase produces ATP from ADP in the presence of a proton or sodium gradient. F-type ATPases consist of two structural domains, F(1) containing the extramembraneous catalytic core and F(0) containing the membrane proton channel, linked together by a central stalk and a peripheral stalk. During catalysis, ATP synthesis in the catalytic domain of F(1) is coupled via a rotary mechanism of the central stalk subunits to proton translocation. In terms of biological role, this protein is part of the stalk that links CF(0) to CF(1). It either transmits conformational changes from CF(0) to CF(1) or is implicated in proton conduction. The sequence is that of ATP synthase subunit delta from Mesoplasma florum (strain ATCC 33453 / NBRC 100688 / NCTC 11704 / L1) (Acholeplasma florum).